The sequence spans 347 residues: Phenylalanine--tRNA ligase alpha subunit (347 aa).

Glu-259 is a binding site for Mg(2+).

This sequence belongs to the class-II aminoacyl-tRNA synthetase family. Phe-tRNA synthetase alpha subunit type 1 subfamily. In terms of assembly, tetramer of two alpha and two beta subunits. Mg(2+) serves as cofactor.

The protein localises to the cytoplasm. It carries out the reaction tRNA(Phe) + L-phenylalanine + ATP = L-phenylalanyl-tRNA(Phe) + AMP + diphosphate + H(+). The polypeptide is Phenylalanine--tRNA ligase alpha subunit (Oenococcus oeni (strain ATCC BAA-331 / PSU-1)).